Here is a 334-residue protein sequence, read N- to C-terminus: F-box protein AUF1 (334 aa).

An F-box domain is found at Met1–Leu49.

As to quaternary structure, part of a SCF (ASK-cullin-F-box) protein ligase complex. Interacts with SKP1A/ASK1, SKP1B/ASK2, ASK11 and ASK13.

Its subcellular location is the nucleus. Its pathway is protein modification; protein ubiquitination. Its function is as follows. Component of SCF(ASK-cullin-F-box) E3 ubiquitin ligase complexes, which may mediate the ubiquitination and subsequent proteasomal degradation of target proteins. Involved in the control of basipetal and acropetal auxin transport by promoting the distribution and expression of the auxin transporter PIN2. Promotes cytokinin-mediated cell expansion in the root elongation and differentiation zone, without affecting root cell division. In Arabidopsis thaliana (Mouse-ear cress), this protein is F-box protein AUF1.